A 349-amino-acid polypeptide reads, in one-letter code: Protein RecA (349 aa).

Residue 65-72 (GPESSGKT) coordinates ATP.

It belongs to the RecA family.

It is found in the cytoplasm. Functionally, can catalyze the hydrolysis of ATP in the presence of single-stranded DNA, the ATP-dependent uptake of single-stranded DNA by duplex DNA, and the ATP-dependent hybridization of homologous single-stranded DNAs. It interacts with LexA causing its activation and leading to its autocatalytic cleavage. The chain is Protein RecA from Vibrio vulnificus (strain CMCP6).